The primary structure comprises 1203 residues: Nitric oxide synthase 3 (1203 aa).

Residues 1-71 (MGNLKSVAQE…PPEGPKFPRV (71 aa)) are disordered. G2 carries N-myristoyl glycine lipidation. S-palmitoyl cysteine attachment occurs at residues C15 and C26. Positions 15-27 (CGLGLGLGLGLCG) are enriched in gly residues. T33 is modified (phosphothreonine). Positions 33–66 (TPAPEPSRAPASLLPPAPEHSPPSSPLTQPPEGP) are enriched in pro residues. Residues C94 and C99 each coordinate Zn(2+). Residues 98 to 486 (RCLGSLVFPR…PDPWKGSAAK (389 aa)) form an interaction with NOSIP region. S102 lines the (6R)-L-erythro-5,6,7,8-tetrahydrobiopterin pocket. At S114 the chain carries Phosphoserine; by CDK5. C184 contacts heme b. 4 residues coordinate L-arginine: Q247, W356, Y357, and E361. R365 contributes to the (6R)-L-erythro-5,6,7,8-tetrahydrobiopterin binding site. N366 is an L-arginine binding site. (6R)-L-erythro-5,6,7,8-tetrahydrobiopterin contacts are provided by A446, W447, and F460. Y475 contacts heme b. The segment at 491–510 (TRKKTFKEVANAVKISASLM) is calmodulin-binding. The residue at position 495 (T495) is a Phosphothreonine; by AMPK. Residues 520–703 (ATILYGSETG…AFRGWAQAAF (184 aa)) enclose the Flavodoxin-like domain. FMN contacts are provided by S526, E527, T528, R530, S572, and T573. Phosphoserine occurs at positions 615, 633, and 638. The FMN site is built by S654, C661, E687, and Q691. The 247-residue stretch at 756–1002 (RKMFQATIRS…IRGAPSFRLP (247 aa)) folds into the FAD-binding FR-type domain. R776 lines the NADP(+) pocket. An FAD-binding site is contributed by H798. The residue at position 836 (S836) is a Phosphoserine. FAD-binding residues include R938, Y940, S941, T956, A958, Y962, V975, C976, and S977. NADP(+)-binding residues include T1016, R1049, S1078, R1079, K1085, Y1087, and Q1089. T1175 is modified (phosphothreonine). Position 1177 is a phosphoserine; by AMPK (S1177). S1179 carries the post-translational modification Phosphoserine.

It belongs to the NOS family. In terms of assembly, homodimer. Interacts with NOSIP and NOSTRIN. Interacts with HSP90AB1. Forms a complex with ASL, ASS1 and SLC7A1; the complex regulates cell-autonomous L-arginine synthesis and citrulline recycling while channeling extracellular L-arginine to nitric oxide synthesis pathway. It depends on heme b as a cofactor. FAD is required as a cofactor. Requires FMN as cofactor. (6R)-L-erythro-5,6,7,8-tetrahydrobiopterin serves as cofactor. Post-translationally, phosphorylation by AMPK at Ser-1177 in the presence of Ca(2+)-calmodulin (CaM) activates activity. In absence of Ca(2+)-calmodulin, AMPK also phosphorylates Thr-495, resulting in inhibition of activity. Phosphorylation of Ser-114 by CDK5 reduces activity. Platelets, placenta, liver and kidney.

It is found in the cell membrane. Its subcellular location is the membrane. It localises to the caveola. The protein localises to the cytoplasm. The protein resides in the cytoskeleton. It is found in the golgi apparatus. The catalysed reaction is 2 L-arginine + 3 NADPH + 4 O2 + H(+) = 2 L-citrulline + 2 nitric oxide + 3 NADP(+) + 4 H2O. With respect to regulation, stimulated by calcium/calmodulin. Inhibited by NOSIP and NOSTRIN. Its function is as follows. Produces nitric oxide (NO) which is implicated in vascular smooth muscle relaxation through a cGMP-mediated signal transduction pathway. NO mediates vascular endothelial growth factor (VEGF)-induced angiogenesis in coronary vessels and promotes blood clotting through the activation of platelets. Lacks eNOS activity, dominant-negative form that may down-regulate eNOS activity by forming heterodimers with isoform 1. This Homo sapiens (Human) protein is Nitric oxide synthase 3.